Consider the following 600-residue polypeptide: UvrABC system protein C (600 aa).

Residues 15 to 100 (NSAGVYQYFN…IKQLHPKYNI (86 aa)) form the GIY-YIG domain. The 36-residue stretch at 203 to 238 (SILIKNLEKQMLVLAQNENYEEAAKVRDQIVTIKDL) folds into the UVR domain.

It belongs to the UvrC family. Interacts with UvrB in an incision complex.

The protein localises to the cytoplasm. In terms of biological role, the UvrABC repair system catalyzes the recognition and processing of DNA lesions. UvrC both incises the 5' and 3' sides of the lesion. The N-terminal half is responsible for the 3' incision and the C-terminal half is responsible for the 5' incision. The chain is UvrABC system protein C from Campylobacter jejuni subsp. jejuni serotype O:23/36 (strain 81-176).